Consider the following 128-residue polypeptide: Small ribosomal subunit protein bS6 (128 aa).

This sequence belongs to the bacterial ribosomal protein bS6 family.

Functionally, binds together with bS18 to 16S ribosomal RNA. The polypeptide is Small ribosomal subunit protein bS6 (Acinetobacter baylyi (strain ATCC 33305 / BD413 / ADP1)).